Reading from the N-terminus, the 631-residue chain is Phosphomethylpyrimidine synthase (631 aa).

Residues asparagine 239, methionine 268, tyrosine 297, histidine 333, 353–355 (SRG), 394–397 (DGLR), and glutamate 433 each bind substrate. Histidine 437 contacts Zn(2+). Residue tyrosine 460 coordinates substrate. Position 501 (histidine 501) interacts with Zn(2+). Positions 581, 584, and 589 each coordinate [4Fe-4S] cluster.

It belongs to the ThiC family. Homodimer. [4Fe-4S] cluster serves as cofactor.

It catalyses the reaction 5-amino-1-(5-phospho-beta-D-ribosyl)imidazole + S-adenosyl-L-methionine = 4-amino-2-methyl-5-(phosphooxymethyl)pyrimidine + CO + 5'-deoxyadenosine + formate + L-methionine + 3 H(+). Its pathway is cofactor biosynthesis; thiamine diphosphate biosynthesis. Functionally, catalyzes the synthesis of the hydroxymethylpyrimidine phosphate (HMP-P) moiety of thiamine from aminoimidazole ribotide (AIR) in a radical S-adenosyl-L-methionine (SAM)-dependent reaction. The polypeptide is Phosphomethylpyrimidine synthase (Salmonella typhi).